The following is a 120-amino-acid chain: MFMLPKYQTFWVFIMISSLIPLLALLISRLLAPVSKGPEKMTSYESGIEPMGDAWIQFQIRYYSFALVFVIFDVETVFLYPWAMSFYELGIFAFIEALIFVFILIIGLVYAWRKRALEWS.

The next 3 helical transmembrane spans lie at 7–27 (YQTF…ALLI), 64–84 (SFAL…PWAM), and 89–109 (LGIF…IGLV).

This sequence belongs to the complex I subunit 3 family. As to quaternary structure, NDH is composed of at least 16 different subunits, 5 of which are encoded in the nucleus.

It localises to the plastid. The protein localises to the chloroplast thylakoid membrane. It carries out the reaction a plastoquinone + NADH + (n+1) H(+)(in) = a plastoquinol + NAD(+) + n H(+)(out). The catalysed reaction is a plastoquinone + NADPH + (n+1) H(+)(in) = a plastoquinol + NADP(+) + n H(+)(out). Functionally, NDH shuttles electrons from NAD(P)H:plastoquinone, via FMN and iron-sulfur (Fe-S) centers, to quinones in the photosynthetic chain and possibly in a chloroplast respiratory chain. The immediate electron acceptor for the enzyme in this species is believed to be plastoquinone. Couples the redox reaction to proton translocation, and thus conserves the redox energy in a proton gradient. The sequence is that of NAD(P)H-quinone oxidoreductase subunit 3, chloroplastic from Psilotum nudum (Whisk fern).